We begin with the raw amino-acid sequence, 256 residues long: 5'-nucleotidase SurE (256 aa).

Residues aspartate 8, aspartate 9, serine 40, and asparagine 92 each contribute to the a divalent metal cation site.

Belongs to the SurE nucleotidase family. A divalent metal cation serves as cofactor.

The protein localises to the cytoplasm. It carries out the reaction a ribonucleoside 5'-phosphate + H2O = a ribonucleoside + phosphate. Its function is as follows. Nucleotidase that shows phosphatase activity on nucleoside 5'-monophosphates. The protein is 5'-nucleotidase SurE of Sinorhizobium medicae (strain WSM419) (Ensifer medicae).